The following is a 118-amino-acid chain: Ribonuclease P protein component (118 aa).

It belongs to the RnpA family. In terms of assembly, consists of a catalytic RNA component (M1 or rnpB) and a protein subunit.

The catalysed reaction is Endonucleolytic cleavage of RNA, removing 5'-extranucleotides from tRNA precursor.. Its function is as follows. RNaseP catalyzes the removal of the 5'-leader sequence from pre-tRNA to produce the mature 5'-terminus. It can also cleave other RNA substrates such as 4.5S RNA. The protein component plays an auxiliary but essential role in vivo by binding to the 5'-leader sequence and broadening the substrate specificity of the ribozyme. The chain is Ribonuclease P protein component from Petrotoga mobilis (strain DSM 10674 / SJ95).